Consider the following 861-residue polypeptide: Ribosome biogenesis protein BOP1 homolog (861 aa).

The disordered stretch occupies residues 1–237 (MVANKSKATK…GDTSDEEDIR (237 aa)). Residues 29–45 (NGRSTKQPEADSDQSAS) are compositionally biased toward polar residues. Composition is skewed to acidic residues over residues 62–77 (DDGDSSDSEGEGDASD) and 87–143 (SDSD…EDLA). 3 stretches are compositionally biased toward basic and acidic residues: residues 144–156 (EPEKPRAIKEGSK), 174–190 (ETKKLLEAAAKEDEKLA), and 212–223 (PERKTGRLKNSD). WD repeat units follow at residues 522–561 (GHTDMIRTISIEPKGEYLVTGSDDKTIKIWEVSTARCIKT), 563–603 (PTGD…CLLS), 692–730 (KSKGLIQCVLFHPVKPCLFVATQRHIRVYDLVKQELLKK), 733–772 (PSCKWISSMAIHPKGDNLLVATYEKKMMWFDLDLSTRPYQ), 776–815 (LHFSAIRNVAFHQRYPLFASASDDRSVIVSHGMVYNDLMQ), and 831–861 (VNDFGAFDVVFHPTQPWLFSSGADNTVRLYT).

It belongs to the WD repeat BOP1/ERB1 family.

Its subcellular location is the nucleus. It is found in the nucleolus. The protein localises to the nucleoplasm. Its function is as follows. Required for maturation of ribosomal RNAs and formation of the large ribosomal subunit. The chain is Ribosome biogenesis protein BOP1 homolog from Culex quinquefasciatus (Southern house mosquito).